The primary structure comprises 604 residues: Elongation factor 4 (604 aa).

In terms of domain architecture, tr-type G spans 7–189 (SRLRNFCIIA…AVVDRIPPPA (183 aa)). GTP contacts are provided by residues 19–24 (DHGKST) and 136–139 (NKID).

The protein belongs to the TRAFAC class translation factor GTPase superfamily. Classic translation factor GTPase family. LepA subfamily.

The protein resides in the cell inner membrane. It carries out the reaction GTP + H2O = GDP + phosphate + H(+). Functionally, required for accurate and efficient protein synthesis under certain stress conditions. May act as a fidelity factor of the translation reaction, by catalyzing a one-codon backward translocation of tRNAs on improperly translocated ribosomes. Back-translocation proceeds from a post-translocation (POST) complex to a pre-translocation (PRE) complex, thus giving elongation factor G a second chance to translocate the tRNAs correctly. Binds to ribosomes in a GTP-dependent manner. This chain is Elongation factor 4, found in Prochlorococcus marinus (strain MIT 9303).